We begin with the raw amino-acid sequence, 476 residues long: Phosphomethylpyrimidine synthase (476 aa).

Residues 1 to 27 (MSTQLQHARDGTVTDAMRRVADREGRD) are disordered. Over residues 7–27 (HARDGTVTDAMRRVADREGRD) the composition is skewed to basic and acidic residues. Residues Asn67, Met96, Tyr125, His160, 180-182 (SRG), 221-224 (DGLR), and Glu260 contribute to the substrate site. Residue His264 coordinates Zn(2+). A substrate-binding site is contributed by Tyr287. His328 is a Zn(2+) binding site. The [4Fe-4S] cluster site is built by Cys408, Cys411, and Cys416. Positions 425-476 (RDAGDDADDMTELTTETDLSESAAAEVNRPPTGTHDAPAAEQAPSPGDDDDD) are disordered. The span at 436 to 447 (ELTTETDLSESA) shows a compositional bias: low complexity.

The protein belongs to the ThiC family. The cofactor is [4Fe-4S] cluster.

The catalysed reaction is 5-amino-1-(5-phospho-beta-D-ribosyl)imidazole + S-adenosyl-L-methionine = 4-amino-2-methyl-5-(phosphooxymethyl)pyrimidine + CO + 5'-deoxyadenosine + formate + L-methionine + 3 H(+). It participates in cofactor biosynthesis; thiamine diphosphate biosynthesis. In terms of biological role, catalyzes the synthesis of the hydroxymethylpyrimidine phosphate (HMP-P) moiety of thiamine from aminoimidazole ribotide (AIR) in a radical S-adenosyl-L-methionine (SAM)-dependent reaction. The polypeptide is Phosphomethylpyrimidine synthase (Halobacterium salinarum (strain ATCC 29341 / DSM 671 / R1)).